Consider the following 253-residue polypeptide: U2 small nuclear ribonucleoprotein A' (253 aa).

4 LRR repeats span residues 19–40 (KDRE…GIAK), 41–62 (DQDA…PFFP), 63–84 (RLHT…IAST), and 87–108 (NLTT…DPLR). The 39-residue stretch at 121–159 (NPVTRKEHYRYWVIWRIPSVRFLDYQKVKDAERAKAKEL) folds into the LRRCT domain. Residues 228–253 (ELNEGRIPGGALDAGEDSEDENQMQT) are disordered. A compositionally biased stretch (acidic residues) spans 241-253 (AGEDSEDENQMQT).

Belongs to the U2 small nuclear ribonucleoprotein A family. In terms of assembly, associated with the spliceosome.

It is found in the nucleus. Its function is as follows. Involved in pre-mRNA splicing. The protein is U2 small nuclear ribonucleoprotein A' (lea1) of Aspergillus fumigatus (strain ATCC MYA-4609 / CBS 101355 / FGSC A1100 / Af293) (Neosartorya fumigata).